The chain runs to 319 residues: MAVVIDTVGARPRHPEKQANPDTPVLRKPEWLRVRAPGSANYMATREVVKSNRLVTVCEEAGCPNIGECWDKSHATFMIMGEVCTRACAFCNVATGKPLALDPDEPARVGEATAKMGLKHVVVTSVDRDDLADGGAWHFVETIRAIRAASPATTIEILTPDFARKPVAALESVIDARPDVFNHNLETVPRLYLSIRPGARYYHSLRLLERVKERDPTQFTKSGIMVGLGESKEEVMQVMDDMRSAGVDFITIGQYLQPTRKHAPIDRFVHPDEFRALEEIARAKGFLMVSASPLTRSSHHAGEDFARLQAARLAKESAA.

The disordered stretch occupies residues 1–24 (MAVVIDTVGARPRHPEKQANPDTP). The span at 13 to 24 (RHPEKQANPDTP) shows a compositional bias: basic and acidic residues. Positions 58, 63, 69, 84, 88, 91, and 298 each coordinate [4Fe-4S] cluster. In terms of domain architecture, Radical SAM core spans 70–287 (WDKSHATFMI…EEIARAKGFL (218 aa)).

It belongs to the radical SAM superfamily. Lipoyl synthase family. [4Fe-4S] cluster serves as cofactor.

The protein resides in the cytoplasm. The catalysed reaction is [[Fe-S] cluster scaffold protein carrying a second [4Fe-4S](2+) cluster] + N(6)-octanoyl-L-lysyl-[protein] + 2 oxidized [2Fe-2S]-[ferredoxin] + 2 S-adenosyl-L-methionine + 4 H(+) = [[Fe-S] cluster scaffold protein] + N(6)-[(R)-dihydrolipoyl]-L-lysyl-[protein] + 4 Fe(3+) + 2 hydrogen sulfide + 2 5'-deoxyadenosine + 2 L-methionine + 2 reduced [2Fe-2S]-[ferredoxin]. It functions in the pathway protein modification; protein lipoylation via endogenous pathway; protein N(6)-(lipoyl)lysine from octanoyl-[acyl-carrier-protein]: step 2/2. In terms of biological role, catalyzes the radical-mediated insertion of two sulfur atoms into the C-6 and C-8 positions of the octanoyl moiety bound to the lipoyl domains of lipoate-dependent enzymes, thereby converting the octanoylated domains into lipoylated derivatives. In Phenylobacterium zucineum (strain HLK1), this protein is Lipoyl synthase.